Consider the following 206-residue polypeptide: Homoserine/homoserine lactone efflux protein (206 aa).

A run of 6 helical transmembrane segments spans residues 5–25 (WWFA…SGAI), 45–65 (GLQT…GTLF), 68–88 (SVIA…WLGI), 117–137 (FVNL…PQFI), 148–168 (IVLG…YATL), and 182–202 (MKAL…LLAS).

The protein belongs to the Rht family.

The protein resides in the cell membrane. In terms of biological role, conducts the efflux of homoserine and homoserine lactone. The protein is Homoserine/homoserine lactone efflux protein (rhtB) of Escherichia coli O157:H7.